Reading from the N-terminus, the 464-residue chain is Asparagine--tRNA ligase (464 aa).

The protein belongs to the class-II aminoacyl-tRNA synthetase family. In terms of assembly, homodimer.

Its subcellular location is the cytoplasm. The catalysed reaction is tRNA(Asn) + L-asparagine + ATP = L-asparaginyl-tRNA(Asn) + AMP + diphosphate + H(+). The sequence is that of Asparagine--tRNA ligase from Xanthomonas euvesicatoria pv. vesicatoria (strain 85-10) (Xanthomonas campestris pv. vesicatoria).